The following is a 770-amino-acid chain: uncharacterized protein (770 aa).

Residues 736–770 form a disordered region; it reads GSGQPGQSPANVGDDPNRMVQSSASQTQIGHVFNN. A compositionally biased stretch (polar residues) spans 754–770; the sequence is MVQSSASQTQIGHVFNN.

This is an uncharacterized protein from Caenorhabditis elegans.